The sequence spans 268 residues: 4-hydroxy-tetrahydrodipicolinate reductase (268 aa).

Residues 7–12 (GAGGRM) and glutamate 33 each bind NAD(+). Arginine 34 is a binding site for NADP(+). NAD(+) is bound by residues 97–99 (GTT) and 121–124 (SGNM). Catalysis depends on histidine 155, which acts as the Proton donor/acceptor. Residue histidine 156 participates in (S)-2,3,4,5-tetrahydrodipicolinate binding. Lysine 159 functions as the Proton donor in the catalytic mechanism. 165-166 (GT) lines the (S)-2,3,4,5-tetrahydrodipicolinate pocket.

Belongs to the DapB family.

It localises to the cytoplasm. It carries out the reaction (S)-2,3,4,5-tetrahydrodipicolinate + NAD(+) + H2O = (2S,4S)-4-hydroxy-2,3,4,5-tetrahydrodipicolinate + NADH + H(+). It catalyses the reaction (S)-2,3,4,5-tetrahydrodipicolinate + NADP(+) + H2O = (2S,4S)-4-hydroxy-2,3,4,5-tetrahydrodipicolinate + NADPH + H(+). It functions in the pathway amino-acid biosynthesis; L-lysine biosynthesis via DAP pathway; (S)-tetrahydrodipicolinate from L-aspartate: step 4/4. Catalyzes the conversion of 4-hydroxy-tetrahydrodipicolinate (HTPA) to tetrahydrodipicolinate. This Brucella melitensis biotype 1 (strain ATCC 23456 / CCUG 17765 / NCTC 10094 / 16M) protein is 4-hydroxy-tetrahydrodipicolinate reductase.